The chain runs to 212 residues: uncharacterized protein (212 aa).

Residues glycine 53, glutamate 74, and aspartate 96 each contribute to the S-adenosyl-L-methionine site.

Belongs to the methyltransferase superfamily. YrrT family.

In terms of biological role, could be a S-adenosyl-L-methionine-dependent methyltransferase. This is an uncharacterized protein from Anoxybacillus flavithermus (strain DSM 21510 / WK1).